Here is a 74-residue protein sequence, read N- to C-terminus: Holin (74 aa).

The next 2 membrane-spanning stretches (helical) occupy residues 15–35 and 37–57; these read VTVVVPAAIALITGLGALYQF and TTAITGTIALLATFAGTVLGV.

In terms of assembly, homomultimer.

It localises to the host cell inner membrane. Accumulates harmlessly in the cytoplasmic membrane until it reaches a critical concentration that triggers the formation of micron-scale pores (holes) causing host cell membrane disruption and endolysin escape into the periplasmic space. Determines the precise timing of host cell lysis. Participates with the endolysin protein in the sequential events which lead to the programmed host cell lysis releasing the mature viral particles from the host cell. The polypeptide is Holin (dph) (Streptococcus pneumoniae (Bacteriophage Dp-1)).